The following is a 139-amino-acid chain: Proline-rich nuclear receptor coactivator 2 (139 aa).

3 disordered regions span residues 1 to 51 (MGGG…GYNS), 61 to 80 (NGGK…SLSG), and 89 to 110 (ANQN…LPKP). Composition is skewed to polar residues over residues 11-36 (APQS…NSQM) and 61-79 (NGGK…SSLS). The SH3-binding motif lies at 99–105 (SEPPSPS). Pro residues predominate over residues 101-110 (PPSPSVLPKP).

Belongs to the PNRC family. PNRC2 subfamily. Interacts with UPF1/RENT1; preferentially interacts with hyperphosphorylated form. Interacts with DCP1A. Interacts with many nuclear receptors including ESR1, ESRRA, ESRRG, NR3C1/GR, NR5A1, PGR, TR, RAR and RXR. In terms of tissue distribution, expressed in heart, lung, muscle and brain.

The protein resides in the nucleus. It is found in the cytoplasm. Its subcellular location is the P-body. Its function is as follows. Involved in nonsense-mediated mRNA decay (NMD) by acting as a bridge between the mRNA decapping complex and the NMD machinery. May act by targeting the NMD machinery to the P-body and recruiting the decapping machinery to aberrant mRNAs. Required for UPF1/RENT1 localization to the P-body. Plays a role in glucocorticoid receptor-mediated mRNA degradation by interacting with the glucocorticoid receptor NR3C1 in a ligand-dependent manner when it is bound to the 5' UTR of target mRNAs and recruiting the RNA helicase UPF1 and the mRNA-decapping enzyme DCP1A, leading to RNA decay. Also acts as a nuclear receptor coactivator. May play a role in controlling the energy balance between energy storage and energy expenditure. The sequence is that of Proline-rich nuclear receptor coactivator 2 (PNRC2) from Homo sapiens (Human).